The following is a 290-amino-acid chain: MKNTFSRLFGFGDKESEFELQDESHEEIAKKVYEEIQEIPIVNITPNRYQPRTVFDDARIEELALTIRTHGLIQPIVVRQYEDDKYEIIAGERRFRAATKLGWEKVPAIIKNLNDTETASVALIENLQREELTAIEEAVAYQKLIELHNLTQEALAQRLGKGQSTVANKLRLLKLPEEIKSALLEKSITERHARALIPLKNEELQLKVLQEIVEKQLNVKQTEERIAKLLEEVKPKRKAKQKAVSRDARIAMNTIRQSLQMVANSGLNVNSAEEEFDEYYQITIKIPKKK.

Residues 153-172 (EALAQRLGKGQSTVANKLRL) constitute a DNA-binding region (H-T-H motif).

It belongs to the ParB family.

It is found in the cytoplasm. The protein localises to the nucleoid. In terms of biological role, effects nucleoid occlusion by binding relatively nonspecifically to DNA and preventing the assembly of the division machinery in the vicinity of the nucleoid, especially under conditions that disturb the cell cycle. It helps to coordinate cell division and chromosome segregation by preventing the formation of the Z ring through the nucleoid, which would cause chromosome breakage. The sequence is that of Nucleoid occlusion protein from Bacillus mycoides (strain KBAB4) (Bacillus weihenstephanensis).